Reading from the N-terminus, the 56-residue chain is Male-specific sperm protein Mst87F (56 aa).

This sequence belongs to the MST(3)CGP family. In terms of tissue distribution, testis.

In Drosophila melanogaster (Fruit fly), this protein is Male-specific sperm protein Mst87F (Mst87F).